Here is a 52-residue protein sequence, read N- to C-terminus: Lantibiotic gallidermin (52 aa).

A propeptide spanning residues 1 to 30 (MEAVKEKNELFDLDVKVNAKESNDSGAEPR) is cleaved from the precursor. Residues 33 to 37 (SKFLC) constitute a cross-link (lanthionine (Ser-Cys)). Residues 38-41 (TPGC) constitute a cross-link (beta-methyllanthionine (Thr-Cys)). Threonine 44 bears the (Z)-2,3-didehydrobutyrine mark. Residues 46–51 (SFNSYC) constitute a cross-link (lanthionine (Ser-Cys)). Positions 49 to 52 (SYCC) form a cross-link, S-(2-aminovinyl)-D-cysteine (Ser-Cys).

The protein belongs to the type A lantibiotic family. Post-translationally, maturation of lantibiotics involves the enzymatic conversion of Thr, and Ser into dehydrated AA and the formation of thioether bonds with cysteine. The C-terminal lanthionine undergoes decarboxylation. This is followed by membrane translocation and cleavage of the modified precursor. The structure of the 2,3-didehydrobutyrine is not discussed in PubMed:1932575. However, in Fig. 5 the NMR model appears to have the Z-isomer.

In terms of biological role, lanthionine-containing peptide antibiotic (lantibiotic) active on Gram-positive bacteria. The bactericidal activity of lantibiotics is based on depolarization of energized bacterial cytoplasmic membranes, initiated by the formation of aqueous transmembrane pores. This is Lantibiotic gallidermin (gdmA) from Staphylococcus gallinarum.